Here is a 277-residue protein sequence, read N- to C-terminus: Formamidopyrimidine-DNA glycosylase (277 aa).

Residue Pro2 is the Schiff-base intermediate with DNA of the active site. Catalysis depends on Glu3, which acts as the Proton donor. Lys60 acts as the Proton donor; for beta-elimination activity in catalysis. His94, Arg113, and Arg156 together coordinate DNA. The FPG-type zinc finger occupies 241–275 (KVYNREGLPCPHCGKPIQRIKVAGRSSYYCSSCQK). Catalysis depends on Arg265, which acts as the Proton donor; for delta-elimination activity.

It belongs to the FPG family. As to quaternary structure, monomer. Zn(2+) is required as a cofactor.

The catalysed reaction is Hydrolysis of DNA containing ring-opened 7-methylguanine residues, releasing 2,6-diamino-4-hydroxy-5-(N-methyl)formamidopyrimidine.. The enzyme catalyses 2'-deoxyribonucleotide-(2'-deoxyribose 5'-phosphate)-2'-deoxyribonucleotide-DNA = a 3'-end 2'-deoxyribonucleotide-(2,3-dehydro-2,3-deoxyribose 5'-phosphate)-DNA + a 5'-end 5'-phospho-2'-deoxyribonucleoside-DNA + H(+). In terms of biological role, involved in base excision repair of DNA damaged by oxidation or by mutagenic agents. Acts as a DNA glycosylase that recognizes and removes damaged bases. Has a preference for oxidized purines, such as 7,8-dihydro-8-oxoguanine (8-oxoG). Has AP (apurinic/apyrimidinic) lyase activity and introduces nicks in the DNA strand. Cleaves the DNA backbone by beta-delta elimination to generate a single-strand break at the site of the removed base with both 3'- and 5'-phosphates. The protein is Formamidopyrimidine-DNA glycosylase of Desulforamulus reducens (strain ATCC BAA-1160 / DSM 100696 / MI-1) (Desulfotomaculum reducens).